We begin with the raw amino-acid sequence, 380 residues long: Erythronate-4-phosphate dehydrogenase (380 aa).

Residues Ser-45 and Thr-66 each coordinate substrate. NAD(+) contacts are provided by residues Asp-146, Thr-174, 205–207 (ASR), and Asp-231. The active site involves Arg-207. Glu-236 is an active-site residue. The active-site Proton donor is the His-253. Gly-256 provides a ligand contact to NAD(+). Tyr-257 contributes to the substrate binding site.

It belongs to the D-isomer specific 2-hydroxyacid dehydrogenase family. PdxB subfamily. As to quaternary structure, homodimer.

The protein resides in the cytoplasm. It carries out the reaction 4-phospho-D-erythronate + NAD(+) = (R)-3-hydroxy-2-oxo-4-phosphooxybutanoate + NADH + H(+). Its pathway is cofactor biosynthesis; pyridoxine 5'-phosphate biosynthesis; pyridoxine 5'-phosphate from D-erythrose 4-phosphate: step 2/5. Catalyzes the oxidation of erythronate-4-phosphate to 3-hydroxy-2-oxo-4-phosphonooxybutanoate. This is Erythronate-4-phosphate dehydrogenase from Pseudomonas putida (strain ATCC 700007 / DSM 6899 / JCM 31910 / BCRC 17059 / LMG 24140 / F1).